A 119-amino-acid chain; its full sequence is Ribonuclease P protein component (119 aa).

It belongs to the RnpA family. In terms of assembly, consists of a catalytic RNA component (M1 or rnpB) and a protein subunit.

The catalysed reaction is Endonucleolytic cleavage of RNA, removing 5'-extranucleotides from tRNA precursor.. Functionally, RNaseP catalyzes the removal of the 5'-leader sequence from pre-tRNA to produce the mature 5'-terminus. It can also cleave other RNA substrates such as 4.5S RNA. The protein component plays an auxiliary but essential role in vivo by binding to the 5'-leader sequence and broadening the substrate specificity of the ribozyme. The chain is Ribonuclease P protein component from Listeria welshimeri serovar 6b (strain ATCC 35897 / DSM 20650 / CCUG 15529 / CIP 8149 / NCTC 11857 / SLCC 5334 / V8).